The sequence spans 117 residues: Large ribosomal subunit protein bL20 (117 aa).

The protein belongs to the bacterial ribosomal protein bL20 family.

Its function is as follows. Binds directly to 23S ribosomal RNA and is necessary for the in vitro assembly process of the 50S ribosomal subunit. It is not involved in the protein synthesizing functions of that subunit. The chain is Large ribosomal subunit protein bL20 from Brachyspira hyodysenteriae (strain ATCC 49526 / WA1).